A 135-amino-acid polypeptide reads, in one-letter code: MKNSSKIFVVLSIILFYVISSCHGYNPFAKTVVTVTNNISPQTTLTISCRSKDDDLGEHLLLHGQAFLWKFRPSWFRTTLFTCKFLWNNNVKWFDTYRSDRDQGHCYSCNWSINADSACISGNFNKKFDRCYPWN.

An N-terminal signal peptide occupies residues 1-24; that stretch reads MKNSSKIFVVLSIILFYVISSCHG. The N-linked (GlcNAc...) asparagine glycan is linked to Asn-110.

Belongs to the plant self-incompatibility (S1) protein family.

The protein localises to the secreted. In Arabidopsis thaliana (Mouse-ear cress), this protein is S-protein homolog 29.